The chain runs to 198 residues: Protein uvp1 (198 aa).

In terms of domain architecture, Resolvase/invertase-type recombinase catalytic spans 1–140; it reads MIIGYARKST…SGLAAARARG (140 aa). Serine 9 (O-(5'-phospho-DNA)-serine intermediate) is an active-site residue. A DNA-binding region (H-T-H motif) is located at residues 168 to 187; it reads VGAVAKRFNVSRMTIYRYTT.

The protein belongs to the site-specific recombinase resolvase family.

Cooperates with the mucAB genes in the DNA repair process. Could be a resolvase-invertase protein. The sequence is that of Protein uvp1 (uvp1) from Escherichia coli.